Here is a 281-residue protein sequence, read N- to C-terminus: sn-glycerol-3-phosphate transport system permease protein UgpE (281 aa).

Transmembrane regions (helical) follow at residues leucine 16–leucine 36, phenylalanine 85–phenylalanine 105, phenylalanine 113–valine 133, leucine 142–phenylalanine 162, alanine 202–isoleucine 222, and tryptophan 247–alanine 267. The ABC transmembrane type-1 domain maps to methionine 77–methionine 268.

It belongs to the binding-protein-dependent transport system permease family. UgpAE subfamily. In terms of assembly, the complex is composed of two ATP-binding proteins (UgpC), two transmembrane proteins (UgpA and UgpE) and a solute-binding protein (UgpB).

It localises to the cell inner membrane. Part of the ABC transporter complex UgpBAEC involved in sn-glycerol-3-phosphate (G3P) import. Probably responsible for the translocation of the substrate across the membrane. The sequence is that of sn-glycerol-3-phosphate transport system permease protein UgpE (ugpE) from Salmonella typhi.